We begin with the raw amino-acid sequence, 154 residues long: Large ribosomal subunit protein uL22c (154 aa).

It belongs to the universal ribosomal protein uL22 family. In terms of assembly, part of the 50S ribosomal subunit.

Its subcellular location is the plastid. The protein resides in the chloroplast. Its function is as follows. This protein binds specifically to 23S rRNA. The globular domain of the protein is located near the polypeptide exit tunnel on the outside of the subunit, while an extended beta-hairpin is found that lines the wall of the exit tunnel in the center of the 70S ribosome. This chain is Large ribosomal subunit protein uL22c (rpl22), found in Helianthus annuus (Common sunflower).